We begin with the raw amino-acid sequence, 887 residues long: Tiger protein O1 (887 aa).

An N-terminal signal peptide occupies residues 1–21 (MEKKLLIIVIVFLFSTIQVFC). At 22-845 (RIDDKTFVIS…SLSKKSIILL (824 aa)) the chain is on the extracellular side. N-linked (GlcNAc...) asparagine glycosylation is found at asparagine 32, asparagine 70, asparagine 186, asparagine 207, asparagine 219, asparagine 259, asparagine 297, asparagine 314, asparagine 325, asparagine 338, asparagine 354, asparagine 393, asparagine 431, asparagine 588, asparagine 629, asparagine 652, asparagine 687, asparagine 710, asparagine 720, asparagine 730, asparagine 775, asparagine 788, asparagine 811, and asparagine 816. An IPT/TIG 1 domain is found at 277 to 365 (NSVPYSKGGL…TNENKLLFNY (89 aa)). The IPT/TIG 2 domain occupies 710-767 (NTSSINVNGGNLTIYGKNFYNVSNIKVEVDNQLKCNKIEFINLNSLTCFLPPFIETLF). Residues 811 to 835 (NDTSENSTNDILNHEKNNNNQKDGS) form a disordered region. Residues 846 to 866 (SILLPSFIILIVSLAIVILVI) traverse the membrane as a helical segment. Residues 867 to 887 (KRNKTKHSKNMSSKEKELMKQ) lie on the Cytoplasmic side of the membrane.

It localises to the membrane. The polypeptide is Tiger protein O1 (tgrO1) (Dictyostelium discoideum (Social amoeba)).